The chain runs to 309 residues: Ribose-phosphate pyrophosphokinase (309 aa).

ATP is bound by residues 37-39 and 96-97; these read DGE and RQ. Positions 130 and 169 each coordinate Mg(2+). Lys192 is a catalytic residue. Residues Arg194, Asp218, and 222–226 contribute to the D-ribose 5-phosphate site; that span reads DTAGT.

It belongs to the ribose-phosphate pyrophosphokinase family. Class I subfamily. Homohexamer. Mg(2+) is required as a cofactor.

It is found in the cytoplasm. It carries out the reaction D-ribose 5-phosphate + ATP = 5-phospho-alpha-D-ribose 1-diphosphate + AMP + H(+). It functions in the pathway metabolic intermediate biosynthesis; 5-phospho-alpha-D-ribose 1-diphosphate biosynthesis; 5-phospho-alpha-D-ribose 1-diphosphate from D-ribose 5-phosphate (route I): step 1/1. In terms of biological role, involved in the biosynthesis of the central metabolite phospho-alpha-D-ribosyl-1-pyrophosphate (PRPP) via the transfer of pyrophosphoryl group from ATP to 1-hydroxyl of ribose-5-phosphate (Rib-5-P). This Campylobacter jejuni subsp. jejuni serotype O:2 (strain ATCC 700819 / NCTC 11168) protein is Ribose-phosphate pyrophosphokinase.